Reading from the N-terminus, the 546-residue chain is Sulfite oxidase, mitochondrial (546 aa).

A mitochondrion-targeting transit peptide spans 1–80 (MLLQLYRSVV…YHEHRCRASQ (80 aa)). The Cytochrome b5 heme-binding domain maps to 83–162 (PRMYSKEDVR…LAEYKIGELN (80 aa)). His-119 provides a ligand contact to heme b. Phosphoserine is present on Ser-124. His-144, Gln-146, and His-148 together coordinate heme b. A hinge region spans residues 166-175 (SMSPSVEASD). Positions 176-402 (PYADDPIRHP…YSHWQRRDYK (227 aa)) are moco domain. Mo-molybdopterin-binding positions include 216 to 220 (FTRNH), Cys-265, Asp-323, His-362, Arg-367, and 378 to 380 (HVK). The tract at residues 403–539 (GFSPSVDWDT…RGVLSNAWHR (137 aa)) is homodimerization.

Homodimer. Heme b serves as cofactor. The cofactor is Mo-molybdopterin.

It is found in the mitochondrion intermembrane space. It catalyses the reaction sulfite + O2 + H2O = sulfate + H2O2. Its pathway is energy metabolism; sulfur metabolism. In terms of biological role, catalyzes the oxidation of sulfite to sulfate, the terminal reaction in the oxidative degradation of sulfur-containing amino acids. The protein is Sulfite oxidase, mitochondrial (Suox) of Mus musculus (Mouse).